The chain runs to 202 residues: LexA repressor (202 aa).

The segment at residues 28–48 is a DNA-binding region (H-T-H motif); it reads RAEIAAQLGFRSPNAAEEHLK. Catalysis depends on for autocatalytic cleavage activity residues serine 119 and lysine 156.

Belongs to the peptidase S24 family. Homodimer.

It carries out the reaction Hydrolysis of Ala-|-Gly bond in repressor LexA.. In terms of biological role, represses a number of genes involved in the response to DNA damage (SOS response), including recA and lexA. Binds to the 16 bp palindromic sequence 5'-CTGTATATATATACAG-3'. In the presence of single-stranded DNA, RecA interacts with LexA causing an autocatalytic cleavage which disrupts the DNA-binding part of LexA, leading to derepression of the SOS regulon and eventually DNA repair. This chain is LexA repressor, found in Erwinia tasmaniensis (strain DSM 17950 / CFBP 7177 / CIP 109463 / NCPPB 4357 / Et1/99).